A 61-amino-acid polypeptide reads, in one-letter code: Potassium channel toxin kappa-KTx 2.8 (61 aa).

The signal sequence occupies residues 1–21; sequence GTVYVFLLLLAFGIFTDISNA. Residues 22 to 35 constitute a propeptide that is removed on maturation; sequence CSEQMDDEDSYEVE. Intrachain disulfides connect C41–C59 and C45–C55.

The protein belongs to the short scorpion toxin superfamily. Potassium channel inhibitor kappa-KTx family. Kappa-KTx 2 subfamily. As to expression, expressed by the venom gland.

The protein localises to the secreted. Voltage-gated potassium channel inhibitor (Kv) that acts on Kv1.3/KCNA3 and Kv7.1/KCNQ1. 1 uM of the toxin inhibits Kv1.3/KCNA3 currents by 35.1%, whereas 10 uM of the toxin inhibits Kv7.1/KCNQ1 currents by 44.9%. This chain is Potassium channel toxin kappa-KTx 2.8, found in Heterometrus petersii (Asian forest scorpion).